Here is a 53-residue protein sequence, read N- to C-terminus: UPF0391 membrane protein Bxeno_A2958 (53 aa).

2 helical membrane passes run 5 to 25 (AIVF…GIAA) and 30 to 50 (IAKI…LLGV).

Belongs to the UPF0391 family.

It localises to the cell membrane. In Paraburkholderia xenovorans (strain LB400), this protein is UPF0391 membrane protein Bxeno_A2958.